Reading from the N-terminus, the 668-residue chain is Protein IQ-DOMAIN 14 (668 aa).

The segment at Met1 to Ile11 is calmodulin-binding. 2 disordered regions span residues Thr16–Ile54 and Gly66–Val305. The span at His18 to Ser31 shows a compositional bias: basic and acidic residues. Over residues Gly32–Leu43 the composition is skewed to basic residues. Residues Pro78–Ala96 are compositionally biased toward pro residues. Low complexity-rich tracts occupy residues Ser97 to Ala120 and Pro166 to Pro175. A compositionally biased stretch (pro residues) spans Pro269–Ser279. 2 IQ domains span residues Gln321–Leu350 and Ala343–Gln372. 2 disordered regions span residues Ala399–Ala431 and Ser476–Ser561. Positions Val415–Ala431 are enriched in basic and acidic residues. Polar residues predominate over residues Asp516 to Thr529.

Belongs to the IQD family. As to quaternary structure, binds to multiple calmodulin (CaM) in the presence of Ca(2+) and CaM-like proteins. As to expression, expressed in hypocotyls, cotyledons, leaves and petioles.

The protein resides in the cell membrane. Its subcellular location is the cytoplasm. The protein localises to the cytoskeleton. May be involved in cooperative interactions with calmodulins or calmodulin-like proteins. Recruits calmodulin proteins to microtubules, thus being a potential scaffold in cellular signaling and trafficking. Regulates cell and organ shapes (prevents twisting) in aerial parts probably by regulating transverse microtubules (MT) arrays alignment. Regulates the formation of oval xylem secondary cell-wall deposition pits through microtubule-dependent lateral inhibition of Rho GTPase domains, thus confining the area of active ROP domains within the lattice of the cortical microtubules. May associate with nucleic acids and regulate gene expression at the transcriptional or post-transcriptional level. In Arabidopsis thaliana (Mouse-ear cress), this protein is Protein IQ-DOMAIN 14.